We begin with the raw amino-acid sequence, 238 residues long: Ribonuclease PH (238 aa).

Residues Arg-86 and 124 to 126 (GTR) contribute to the phosphate site.

This sequence belongs to the RNase PH family. As to quaternary structure, homohexameric ring arranged as a trimer of dimers.

It carries out the reaction tRNA(n+1) + phosphate = tRNA(n) + a ribonucleoside 5'-diphosphate. Phosphorolytic 3'-5' exoribonuclease that plays an important role in tRNA 3'-end maturation. Removes nucleotide residues following the 3'-CCA terminus of tRNAs; can also add nucleotides to the ends of RNA molecules by using nucleoside diphosphates as substrates, but this may not be physiologically important. Probably plays a role in initiation of 16S rRNA degradation (leading to ribosome degradation) during starvation. The sequence is that of Ribonuclease PH from Photobacterium profundum (strain SS9).